Consider the following 77-residue polypeptide: UPF0291 protein BLi02035/BL02933 (77 aa).

Residues 57–77 (PEGNDVTPEKLKQEKRNRRLH) form a disordered region.

This sequence belongs to the UPF0291 family.

It is found in the cytoplasm. The chain is UPF0291 protein BLi02035/BL02933 from Bacillus licheniformis (strain ATCC 14580 / DSM 13 / JCM 2505 / CCUG 7422 / NBRC 12200 / NCIMB 9375 / NCTC 10341 / NRRL NRS-1264 / Gibson 46).